Consider the following 467-residue polypeptide: ATP synthase subunit beta (467 aa).

150–157 (GGAGVGKT) is an ATP binding site.

The protein belongs to the ATPase alpha/beta chains family. In terms of assembly, F-type ATPases have 2 components, CF(1) - the catalytic core - and CF(0) - the membrane proton channel. CF(1) has five subunits: alpha(3), beta(3), gamma(1), delta(1), epsilon(1). CF(0) has three main subunits: a(1), b(2) and c(9-12). The alpha and beta chains form an alternating ring which encloses part of the gamma chain. CF(1) is attached to CF(0) by a central stalk formed by the gamma and epsilon chains, while a peripheral stalk is formed by the delta and b chains.

Its subcellular location is the cell inner membrane. It catalyses the reaction ATP + H2O + 4 H(+)(in) = ADP + phosphate + 5 H(+)(out). Functionally, produces ATP from ADP in the presence of a proton gradient across the membrane. The catalytic sites are hosted primarily by the beta subunits. This Aliivibrio salmonicida (strain LFI1238) (Vibrio salmonicida (strain LFI1238)) protein is ATP synthase subunit beta.